The chain runs to 548 residues: Spindle pole body-associated protein cut12 (548 aa).

Positions 122-325 (FKSPLLQSTP…GQQSKYKGKE (204 aa)) are interaction with plo1. The disordered stretch occupies residues 123–182 (KSPLLQSTPKPNINNPDNENKSKHDEFDNRYNININESYKNETKSNQRLGEDVPSKKKYP). The span at 126-139 (LLQSTPKPNINNPD) shows a compositional bias: polar residues. 2 stretches are compositionally biased toward basic and acidic residues: residues 140-151 (NENKSKHDEFDN) and 161-182 (YKNETKSNQRLGEDVPSKKKYP). Residues 261-312 (KQKFSMLDSAHSDLELELTSIRERLESLILEKQEEINFWKQRCRALETEKIH) adopt a coiled-coil conformation. Residues 344–356 (PITTKVVSRPSQS) are compositionally biased toward polar residues. Disordered regions lie at residues 344–369 (PITTKVVSRPSQSDVREPQEQVPSKN) and 510–548 (SRVDYDLKSPNQRTANAKKRLEERRRRRKLKLQELQLNS). The stretch at 522–548 (RTANAKKRLEERRRRRKLKLQELQLNS) forms a coiled coil.

As to quaternary structure, self-associates. Interacts with plo1.

Its subcellular location is the cytoplasm. The protein localises to the cytoskeleton. It is found in the microtubule organizing center. It localises to the spindle pole body. Functionally, required for bipolar spindle formation. May act as a regulator of the p34cdc2/cyclin B kinase. Required for full activation of the plo1 kinase. However, in cut12.1 cells at restrictive temperature the H1 kinase does rise concomitant with entry into mitosis, indicating that cut12 is not required for activation of p34cdc2/cyclin B. The cut12.s11 allele may promote cdc2-independent phosphorylation of SPB proteins thereby overcoming the requirement for cdc25 in cell cycle progression. The sequence is that of Spindle pole body-associated protein cut12 (cut12) from Schizosaccharomyces pombe (strain 972 / ATCC 24843) (Fission yeast).